The sequence spans 263 residues: 4-hydroxy-tetrahydrodipicolinate reductase (263 aa).

NAD(+) contacts are provided by residues 7 to 12 (GFKGRM), 96 to 98 (GTT), and 122 to 125 (APNF). Histidine 152 (proton donor/acceptor) is an active-site residue. Histidine 153 is a (S)-2,3,4,5-tetrahydrodipicolinate binding site. Catalysis depends on lysine 156, which acts as the Proton donor. (S)-2,3,4,5-tetrahydrodipicolinate is bound at residue 162–163 (GT).

It belongs to the DapB family.

Its subcellular location is the cytoplasm. It carries out the reaction (S)-2,3,4,5-tetrahydrodipicolinate + NAD(+) + H2O = (2S,4S)-4-hydroxy-2,3,4,5-tetrahydrodipicolinate + NADH + H(+). The catalysed reaction is (S)-2,3,4,5-tetrahydrodipicolinate + NADP(+) + H2O = (2S,4S)-4-hydroxy-2,3,4,5-tetrahydrodipicolinate + NADPH + H(+). It participates in amino-acid biosynthesis; L-lysine biosynthesis via DAP pathway; (S)-tetrahydrodipicolinate from L-aspartate: step 4/4. In terms of biological role, catalyzes the conversion of 4-hydroxy-tetrahydrodipicolinate (HTPA) to tetrahydrodipicolinate. The protein is 4-hydroxy-tetrahydrodipicolinate reductase of Listeria monocytogenes serovar 1/2a (strain ATCC BAA-679 / EGD-e).